The following is a 930-amino-acid chain: MQRYDIIRMIGKGGMGEVYLAYDPVCSRKVALKRIREDLSDNELLKKRFLREAKIAADLVHPGVVPVFTICSDSDPVYYTMPYIEGYTLKSLLKSVWQCDSLPKDLAEQTSVATFLSIFHKICSTVEYVHSRGILHRDLKPDNILLGLFSEVVILDWGAALSKEMEEDFLSDIDVRIPGSLFSNMTIPGKIVGTPDYMAPERLRGTPASESTDIYALGVILYQMLTLSFPYRKKKGQKISLRHQISFPEEIAPHREIPPFLSQVVMRALAADPRERYRSVSALKADIEQHLQGSPEWTPKIVLHTQDRECWKFHEPILLSKYFPMLEVSPALWYSLAISKIESFSEVRLEYTLLRKGLEEGFGILLPPSEGVDHGDFYHGYGFWLHIKENILSVSLVKNGLEIQKTSRHIDGNKEKFFIAFEKQNHRLSLIIDNIVWTIHMDYLPARGGRIGVIIQDVADVCGNIVVLESSGSLQVSCLAVPDAFLNEKLYERAITFYRRIVESFPGRKEGYEAQFRIGIALLEKASENSDSEGFIQALEEFSTLHNSVAAPLEYLGKALVYQRLGEYNEEVKSLLLALKRYCQRPEISRVRDHVVYRLHEALYSNHRISLVFMLLALHVAPESINASEEEHFLQNLHGKIQDTLFCNLDISPVDFRSSKMELLLSYWSGFTPFLLGLFQRSWDLKDYRALADIFYTAADLGNKEFIEEYSGILRENIRTTTFSKEIVEILPDQLLCFLSGLEALTLQESIEKVFDGIENLDPVLILYLFDLFAKDALIHGRGEEILKAIALVEKYISPQQRYRYLLPYEVLSYLWMKDANKVYDLLSSYDESSWIDDSSHAFVLYGYWLALAEDSSLAYLHLSGCREDSVFPRALIGVFCSPLGICEEQLSYQERRQLLLQKFIFFHCLGNSEERDKCRTAYDSKERSL.

The Protein kinase domain occupies 4-291 (YDIIRMIGKG…ALKADIEQHL (288 aa)). ATP-binding positions include 10–18 (IGKGGMGEV) and Lys-33. Residue Asp-138 is the Proton acceptor of the active site.

Belongs to the protein kinase superfamily. Ser/Thr protein kinase family. Post-translationally, autophosphorylated on serine and threonine residues.

It catalyses the reaction L-seryl-[protein] + ATP = O-phospho-L-seryl-[protein] + ADP + H(+). The enzyme catalyses L-threonyl-[protein] + ATP = O-phospho-L-threonyl-[protein] + ADP + H(+). Functionally, together with the serine/threonine kinase Pkn1, may play a role in the specific interactions with host proteins during intracellular growth. This Chlamydia caviae (strain ATCC VR-813 / DSM 19441 / 03DC25 / GPIC) (Chlamydophila caviae) protein is Serine/threonine-protein kinase PknD.